A 341-amino-acid chain; its full sequence is UDP-glucuronic acid decarboxylase 5 (341 aa).

The interval 1–21 (MASSDKQTSPKPPPSPSPLRN) is disordered. Residue 60 to 85 (DNYFTGSKDNLKKWIGHPRFELIRHD) participates in NAD(+) binding. R169 serves as a coordination point for substrate. The active-site Proton acceptor is Y172. 172 to 176 (YDEGK) provides a ligand contact to NAD(+). Position 201 (N201) interacts with substrate. NAD(+) is bound at residue R213. Substrate-binding positions include 214-218 (VVSNF), 231-238 (QKPGTQTR), and 298-302 (DPRQR).

Belongs to the NAD(P)-dependent epimerase/dehydratase family. UDP-glucuronic acid decarboxylase subfamily. It depends on NAD(+) as a cofactor.

The protein resides in the cytoplasm. The catalysed reaction is UDP-alpha-D-glucuronate + H(+) = UDP-alpha-D-xylose + CO2. The protein operates within nucleotide-sugar biosynthesis; UDP-alpha-D-xylose biosynthesis; UDP-alpha-D-xylose from UDP-alpha-D-glucuronate: step 1/1. Its function is as follows. Catalyzes the NAD-dependent decarboxylation of UDP-glucuronic acid to UDP-xylose. Necessary for the biosynthesis of the core tetrasaccharide in glycosaminoglycan biosynthesis. In Arabidopsis thaliana (Mouse-ear cress), this protein is UDP-glucuronic acid decarboxylase 5 (UXS5).